The primary structure comprises 277 residues: Ras suppressor protein 1 (277 aa).

The interval 1–23 is disordered; it reads MSKSLKKLVEESREKNQPEVDMS. Residue serine 2 is modified to N-acetylserine. Positions 7 to 23 are enriched in basic and acidic residues; the sequence is KLVEESREKNQPEVDMS. LRR repeat units follow at residues 41–63, 64–85, 87–109, 110–133, 135–156, 158–179, and 181–202; these read HITQ…AELK, NLEV…ISSL, KLKH…GSLP, ALEV…FFYL, TLRA…IGKL, KLQI…IGEL, and QLKE…LGNL. The segment at 250–277 is disordered; it reads MQANPEPPKKNNDKSKKISRKPLAAKNK. The span at 256-265 shows a compositional bias: basic and acidic residues; that stretch reads PPKKNNDKSK.

Potentially plays a role in the Ras signal transduction pathway. Capable of suppressing v-Ras transformation in vitro. In Bos taurus (Bovine), this protein is Ras suppressor protein 1 (RSU1).